A 252-amino-acid chain; its full sequence is Homeobox protein EMX2 (252 aa).

The homeobox DNA-binding region spans 154-213 (PKRIRTAFSPSQLLRLEHAFEKNHYVVGAERKQLAHSLSLTETQVKVWFQNRRTKFKRQK). The tract at residues 212–252 (QKLEEEGSDSQQKKKGTHHINRWRIATKQASPEEIDVTSDD) is disordered. Basic residues predominate over residues 224 to 233 (KKKGTHHINR).

Belongs to the EMX homeobox family. As to quaternary structure, interacts with translation initiation factor EIF4E. Cerebral cortex.

The protein resides in the nucleus. The protein localises to the cell projection. It is found in the axon. Transcription factor, which in cooperation with EMX1, acts to generate the boundary between the roof and archipallium in the developing brain. May function in combination with OTX1/2 to specify cell fates in the developing central nervous system. In the inner ear, it controls the distribution of GPR156 at hair cell boundaries, and regulates the organization of stereociliary bundles in opposite orientations across the line of polarity reversal (LPR). This Homo sapiens (Human) protein is Homeobox protein EMX2 (EMX2).